The chain runs to 269 residues: uncharacterized protein (269 aa).

The interval 1–21 (MAYSSSNSDIEDDSSKSNSNL) is disordered.

This is an uncharacterized protein from Homo sapiens (Human).